The following is a 198-amino-acid chain: Glycerol-3-phosphate acyltransferase (198 aa).

Helical transmembrane passes span L10–V30, G57–L77, I86–F106, V118–F138, and A160–I180.

It belongs to the PlsY family. In terms of assembly, probably interacts with PlsX.

The protein resides in the cell inner membrane. The catalysed reaction is an acyl phosphate + sn-glycerol 3-phosphate = a 1-acyl-sn-glycero-3-phosphate + phosphate. The protein operates within lipid metabolism; phospholipid metabolism. In terms of biological role, catalyzes the transfer of an acyl group from acyl-phosphate (acyl-PO(4)) to glycerol-3-phosphate (G3P) to form lysophosphatidic acid (LPA). This enzyme utilizes acyl-phosphate as fatty acyl donor, but not acyl-CoA or acyl-ACP. The polypeptide is Glycerol-3-phosphate acyltransferase (Anaplasma marginale (strain Florida)).